A 200-amino-acid polypeptide reads, in one-letter code: Blue fluorescence protein (200 aa).

2 Lumazine-binding repeats span residues 1 to 111 (MFKG…TGGR) and 112 to 200 (SLSG…AGNW).

As to quaternary structure, monomer.

The protein resides in the cytoplasm. Blue fluorescence protein (BFP) that can bind 6,7-dimethyl-8-ribityllumazine, riboflavin, and 6-methyl-7-oxo-8-ribityllumazine as a bound fluorophore. Has no riboflavin-synthase activity. The polypeptide is Blue fluorescence protein (Aliivibrio fischeri (Vibrio fischeri)).